The primary structure comprises 687 residues: Geranylgeranyl transferase type-2 subunit alpha 2 (687 aa).

PFTA repeat units lie at residues 38–72 (YTKE…SRLD), 83–117 (IIDE…KKGH), 132–167 (YQKQ…LTKT), 168–203 (SEED…SLVA), and 214–248 (TIRR…QTVK). LRR repeat units lie at residues 523 to 545 (MNNI…VEKL), 546 to 567 (LFVQ…LEAM), 568 to 591 (QLLC…SLRH), 592 to 616 (LKQL…TTRY), and 646 to 668 (LMKL…EFSS).

Belongs to the protein prenyltransferase subunit alpha family. Heterotrimer composed of the alpha subunit RGTA, the beta subunit RGTB and REP; within this trimer, RGTA and RGTB form the catalytic component, while REP mediates peptide substrate binding.

The enzyme catalyses geranylgeranyl diphosphate + L-cysteinyl-[protein] = S-geranylgeranyl-L-cysteinyl-[protein] + diphosphate. With respect to regulation, the enzymatic reaction requires the aid of the Rab escort protein REP. Its function is as follows. Catalyzes the transfer of a geranylgeranyl moiety from geranylgeranyl diphosphate to both cysteines of Rab proteins with the C-terminal sequence -CCXX, CXXX, -XCCX and -XCXC, such as RABA1A, RABA2A, RABF2A and RABG2. Does not seem to be a functional Rab-GGT alpha subunit in vitro. The sequence is that of Geranylgeranyl transferase type-2 subunit alpha 2 from Arabidopsis thaliana (Mouse-ear cress).